A 595-amino-acid polypeptide reads, in one-letter code: uncharacterized protein (595 aa).

The N-terminal stretch at 1-23 is a signal peptide; that stretch reads MLSLSSPPWLLLLVLFFFANGSA. Residues N31, N63, N88, N112, N144, N187, N205, N389, N480, N492, and N506 are each glycosylated (N-linked (GlcNAc...) asparagine). Residues 61–83 show a composition bias toward polar residues; that stretch reads LENQTASSSNLNTNNEASDEQTG. 2 disordered regions span residues 61 to 119 and 141 to 164; these read LENQ…VSSL and TALNGSGTPPEHQTIGQAPPTKGE. The span at 84-119 shows a compositional bias: low complexity; it reads NSNSNTSSHSRNINGLPSSNSNIDNANSNSSSVSSL.

It localises to the secreted. This is an uncharacterized protein from Drosophila melanogaster (Fruit fly).